A 101-amino-acid polypeptide reads, in one-letter code: Large ribosomal subunit protein uL24 (101 aa).

The protein belongs to the universal ribosomal protein uL24 family. In terms of assembly, part of the 50S ribosomal subunit.

Functionally, one of two assembly initiator proteins, it binds directly to the 5'-end of the 23S rRNA, where it nucleates assembly of the 50S subunit. In terms of biological role, one of the proteins that surrounds the polypeptide exit tunnel on the outside of the subunit. The protein is Large ribosomal subunit protein uL24 of Borrelia hermsii (strain HS1 / DAH).